We begin with the raw amino-acid sequence, 104 residues long: Seminal ribonuclease (104 aa).

4 disulfide bridges follow: C12/C70, C26/C81, C44/C96, and C51/C58. Substrate is bound by residues 27–31 (KPVNT), K52, and R71.

Belongs to the pancreatic ribonuclease family. In terms of assembly, homodimer; disulfide-linked.

Its subcellular location is the secreted. The enzyme catalyses an [RNA] containing cytidine + H2O = an [RNA]-3'-cytidine-3'-phosphate + a 5'-hydroxy-ribonucleotide-3'-[RNA].. It carries out the reaction an [RNA] containing uridine + H2O = an [RNA]-3'-uridine-3'-phosphate + a 5'-hydroxy-ribonucleotide-3'-[RNA].. The chain is Seminal ribonuclease (SRN) from Saiga tatarica (Saiga antelope).